Consider the following 366-residue polypeptide: Tetraacyldisaccharide 4'-kinase (366 aa).

Residue 65–72 participates in ATP binding; that stretch reads TVGGTGKT. The segment at 343-366 is disordered; the sequence is AKSTPASGGATGLNKEHQDGQPAA. Positions 356-366 are enriched in basic and acidic residues; the sequence is NKEHQDGQPAA.

It belongs to the LpxK family.

The catalysed reaction is a lipid A disaccharide + ATP = a lipid IVA + ADP + H(+). The protein operates within glycolipid biosynthesis; lipid IV(A) biosynthesis; lipid IV(A) from (3R)-3-hydroxytetradecanoyl-[acyl-carrier-protein] and UDP-N-acetyl-alpha-D-glucosamine: step 6/6. Transfers the gamma-phosphate of ATP to the 4'-position of a tetraacyldisaccharide 1-phosphate intermediate (termed DS-1-P) to form tetraacyldisaccharide 1,4'-bis-phosphate (lipid IVA). In Cupriavidus pinatubonensis (strain JMP 134 / LMG 1197) (Cupriavidus necator (strain JMP 134)), this protein is Tetraacyldisaccharide 4'-kinase.